The chain runs to 334 residues: L-lactate dehydrogenase B chain (334 aa).

An N-acetylalanine modification is found at Ala-2. Position 7 is an N6-acetyllysine (Lys-7). 31–53 (QVGMACAISILGKSLADELALVD) serves as a coordination point for NAD(+). A Phosphoserine modification is found at Ser-44. Lys-58 carries the N6-acetyllysine modification. NAD(+) is bound at residue Arg-100. Arg-107 lines the substrate pocket. Lys-119 is subject to N6-acetyllysine. Asn-139 contacts NAD(+). Substrate-binding residues include Asn-139 and Arg-170. His-194 acts as the Proton acceptor in catalysis. Tyr-240 is subject to Phosphotyrosine. Thr-249 is a binding site for substrate. Lys-329 is subject to N6-acetyllysine.

Belongs to the LDH/MDH superfamily. LDH family. As to quaternary structure, homotetramer. Interacts with PTEN upstream reading frame protein MP31; the interaction leads to inhibition of mitochondrial lactate dehydrogenase activity, preventing conversion of lactate to pyruvate in mitochondria. As to expression, predominantly expressed in aerobic tissues such as cardiac muscle.

The protein localises to the cytoplasm. It localises to the mitochondrion inner membrane. The catalysed reaction is (S)-lactate + NAD(+) = pyruvate + NADH + H(+). It functions in the pathway fermentation; pyruvate fermentation to lactate; (S)-lactate from pyruvate: step 1/1. Functionally, interconverts simultaneously and stereospecifically pyruvate and lactate with concomitant interconversion of NADH and NAD(+). This Homo sapiens (Human) protein is L-lactate dehydrogenase B chain (LDHB).